A 161-amino-acid chain; its full sequence is RNA pyrophosphohydrolase (161 aa).

Residues 7–149 (KYRPCVGIML…KKEVYKTVIE (143 aa)) enclose the Nudix hydrolase domain. Residues 40 to 61 (GGIDDGEKLEQAALRELLEEVG) carry the Nudix box motif.

It belongs to the Nudix hydrolase family. RppH subfamily. A divalent metal cation is required as a cofactor.

Its function is as follows. Accelerates the degradation of transcripts by removing pyrophosphate from the 5'-end of triphosphorylated RNA, leading to a more labile monophosphorylated state that can stimulate subsequent ribonuclease cleavage. The chain is RNA pyrophosphohydrolase from Wolbachia sp. subsp. Brugia malayi (strain TRS).